Reading from the N-terminus, the 540-residue chain is H(+)/hexose cotransporter 2 (540 aa).

Residues 1-29 (MAGGGPVASTTTNRASQYGYARGGLNWYI) lie on the Cytoplasmic side of the membrane. A helical membrane pass occupies residues 30-50 (FIVALTAGSGGLLFGYDIGVT). The Extracellular segment spans residues 51 to 90 (GGVTSMPEFLQKFFPSIYDRTQQPSDSKDPYCTYDDQKLQ). The chain crosses the membrane as a helical span at residues 91–111 (LFTSSFFLAGMFVSFFAGSVV). The Cytoplasmic segment spans residues 112–124 (RRWGRKPTMLIAS). Residues 125–135 (VLFLAGAGLNA) traverse the membrane as a helical segment. Over 136–147 (GAQDLAMLVIGR) the chain is Extracellular. The helical transmembrane segment at 148 to 168 (VLLGFGVGGGNNAVPLYLSEC) threads the bilayer. Residues 169–176 (APPKYRGG) are Cytoplasmic-facing. A helical membrane pass occupies residues 177–197 (LNMMFQLAVTIGIIVAQLVNY). Residues 198–207 (GTQTMNNGWR) are Extracellular-facing. A helical membrane pass occupies residues 208–228 (LSLGLAGVPAIILLIGSLLLP). The Cytoplasmic portion of the chain corresponds to 229-296 (ETPNSLIERG…YSPMLIVTSL (68 aa)). A helical membrane pass occupies residues 297–317 (IAMLQQLTGINAIMFYVPVLF). The Extracellular segment spans residues 318–326 (SSFGTARHA). A helical membrane pass occupies residues 327-337 (ALLNTVIIGAV). At 338–355 (NVAATFVSIFSVDKFGRR) the chain is on the cytoplasmic side. The helical transmembrane segment at 356–376 (GLFLEGGIQMFIGQVVTAAVL) threads the bilayer. The Extracellular portion of the chain corresponds to 377 to 396 (GVELNKYGTNLPSSTAAGVL). A helical transmembrane segment spans residues 397-417 (VVICVYVAAFAWSWGPLGWLV). Over 418–435 (PSEIQTLETRGAGMSMAV) the chain is Cytoplasmic. The helical transmembrane segment at 436-456 (IVNFLFSFVIGQAFLSMMCAM) threads the bilayer. The Extracellular portion of the chain corresponds to 457-458 (RW). Residues 459–479 (GVFLFFAGWVVIMTFFVYFCL) form a helical membrane-spanning segment. Residues 480–540 (PETKGVPVET…SEDGKPASDQ (61 aa)) lie on the Cytoplasmic side of the membrane.

Belongs to the major facilitator superfamily. Sugar transporter (TC 2.A.1.1) family.

Its subcellular location is the membrane. Active uptake of galactose. The polypeptide is H(+)/hexose cotransporter 2 (HUP2) (Parachlorella kessleri (Green alga)).